A 786-amino-acid chain; its full sequence is Protein RDM16 (786 aa).

3 stretches are compositionally biased toward basic and acidic residues: residues 1–80, 87–112, and 123–143; these read MDKE…SRDR, RSHEGSKEKESRSKRKDREEENGARD, and NGERRSRFEDVAIEVENKDAQ. Disordered regions lie at residues 1-223, 255-283, 532-557, and 616-642; these read MDKE…SANL, KKATKPTSEGSPHTRVPPSTTTPAVSTGT, RPIEPPAEAAPPPPQPLKLTKKEQKK, and EREQAHTDRNAARKLTPAEKREKKERK. A compositionally biased stretch (polar residues) spans 145-164; that stretch reads SEGSGATNPTSGVTMGASTY. A compositionally biased stretch (low complexity) spans 165-176; that stretch reads SSIPSEASAAPS. The segment covering 177–189 has biased composition (polar residues); the sequence is QTLLTKVSSISTT. Residues 190–203 are compositionally biased toward basic and acidic residues; that stretch reads DENKASVVRSHEVP. Low complexity predominate over residues 268–283; that stretch reads TRVPPSTTTPAVSTGT. Pro residues predominate over residues 534 to 547; that stretch reads IEPPAEAAPPPPQP.

It is found in the nucleus. The protein localises to the nucleoplasm. In terms of biological role, functions in the RNA-directed DNA methylation (RdDM) pathway. Acts as a pre-mRNA splicing factor, likely by affecting Pol V transcripts. Affects DNA methylation of transposable elements (TEs) and preferentially influences NRPD1- and ROS1-targeted loci. In Arabidopsis thaliana (Mouse-ear cress), this protein is Protein RDM16.